We begin with the raw amino-acid sequence, 548 residues long: Membrane protein insertase YidC (548 aa).

A helical membrane pass occupies residues 6–26; that stretch reads NLLVIALLFVSFMIWQAWEQD. A disordered region spans residues 28–55; that stretch reads NPQPQAQQTTQTTTTAAGSAADQGVPAS. Low complexity predominate over residues 30 to 50; sequence QPQAQQTTQTTTTAAGSAADQ. The next 4 membrane-spanning stretches (helical) occupy residues 350-370, 420-440, 458-478, and 499-519; these read FVGN…GIMY, LGGC…YYML, LSAQ…MFFI, and PVIF…YYIV.

Belongs to the OXA1/ALB3/YidC family. Type 1 subfamily. As to quaternary structure, interacts with the Sec translocase complex via SecD. Specifically interacts with transmembrane segments of nascent integral membrane proteins during membrane integration.

It localises to the cell inner membrane. Its function is as follows. Required for the insertion and/or proper folding and/or complex formation of integral membrane proteins into the membrane. Involved in integration of membrane proteins that insert both dependently and independently of the Sec translocase complex, as well as at least some lipoproteins. Aids folding of multispanning membrane proteins. In Shigella dysenteriae serotype 1 (strain Sd197), this protein is Membrane protein insertase YidC.